The primary structure comprises 207 residues: Outer-membrane lipoprotein LolB (207 aa).

A signal peptide spans 1 to 21; the sequence is MPLPDFRLIRLLPLAALVLTA. Residue Cys22 is the site of N-palmitoyl cysteine attachment. Cys22 is lipidated: S-diacylglycerol cysteine.

This sequence belongs to the LolB family. In terms of assembly, monomer.

It is found in the cell outer membrane. Its function is as follows. Plays a critical role in the incorporation of lipoproteins in the outer membrane after they are released by the LolA protein. The sequence is that of Outer-membrane lipoprotein LolB from Escherichia coli O127:H6 (strain E2348/69 / EPEC).